The chain runs to 577 residues: BICD family-like cargo adapter 1 (577 aa).

The tract at residues 63–100 is disordered; it reads LLAAGERSSEPGEHPQAEPESPVEGHGPPLPPPPTQDP. The segment covering 69–79 has biased composition (basic and acidic residues); that stretch reads RSSEPGEHPQA. A CC1 box motif is present at residues 116 to 120; that stretch reads AARLG. A coiled-coil region spans residues 121-379; the sequence is KALLERNQDM…QLWEAYCQVR (259 aa). Positions 389–415 are disordered; that stretch reads DSADSAVSTDSSMDESSETSSAKDVPA. Low complexity predominate over residues 390-399; that stretch reads SADSAVSTDS. Residues 443–528 adopt a coiled-coil conformation; that stretch reads LSVEMTALKE…LEAWQDDMHR (86 aa).

Belongs to the BICDR family. In terms of assembly, part of a tripartite complex with dynein and dynactin, acts an adapter linking the dynein motor complex and dynactin. Interacts with KIF1C. Interacts with RAB6A and RAB6B; interaction is specific to Rab6. In terms of tissue distribution, highly expressed during early embryonic development. Predominantly expressed in kidney, undifferentiated neural tissue and developing eye.

Its subcellular location is the cytoplasm. The protein localises to the cytoskeleton. It is found in the microtubule organizing center. It localises to the centrosome. In terms of biological role, acts as an adapter protein linking the dynein motor complex to various cargos and converts dynein from a non-processive to a highly processive motor in the presence of dynactin. Facilitates the interaction between dynein and dynactin and activates dynein processivity (the ability to move along a microtubule for a long distance without falling off the track). Predominantly recruits 2 dyneins, which increases both the force and speed of the microtubule motor. Component of secretory vesicle machinery in developing neurons that acts as a regulator of neurite outgrowth. Regulates the secretory vesicle transport by controlling the accumulation of Rab6-containing secretory vesicles in the pericentrosomal region restricting anterograde secretory transport during the early phase of neuronal differentiation, thereby inhibiting neuritogenesis. The chain is BICD family-like cargo adapter 1 (Bicdl1) from Mus musculus (Mouse).